The sequence spans 184 residues: Photosystem I assembly protein Ycf4 (184 aa).

2 helical membrane-spanning segments follow: residues 20–42 (VNLC…GFSS) and 57–79 (IAFI…LGLY).

The protein belongs to the Ycf4 family.

The protein localises to the plastid. The protein resides in the chloroplast thylakoid membrane. Its function is as follows. Seems to be required for the assembly of the photosystem I complex. This Adiantum capillus-veneris (Maidenhair fern) protein is Photosystem I assembly protein Ycf4.